We begin with the raw amino-acid sequence, 482 residues long: UDP-N-acetylmuramoyl-L-alanyl-D-glutamate--2,6-diaminopimelate ligase (482 aa).

Residues L28 and S30 each contribute to the UDP-N-acetyl-alpha-D-muramoyl-L-alanyl-D-glutamate site. 108 to 114 (GTNGKTT) lines the ATP pocket. UDP-N-acetyl-alpha-D-muramoyl-L-alanyl-D-glutamate contacts are provided by residues 150–151 (TT), S177, Q183, and R185. The residue at position 217 (K217) is an N6-carboxylysine. Residues R372, 396 to 399 (DNPR), G447, and E451 contribute to the meso-2,6-diaminopimelate site. Positions 396–399 (DNPR) match the Meso-diaminopimelate recognition motif motif.

It belongs to the MurCDEF family. MurE subfamily. The cofactor is Mg(2+). Carboxylation is probably crucial for Mg(2+) binding and, consequently, for the gamma-phosphate positioning of ATP.

Its subcellular location is the cytoplasm. The catalysed reaction is UDP-N-acetyl-alpha-D-muramoyl-L-alanyl-D-glutamate + meso-2,6-diaminopimelate + ATP = UDP-N-acetyl-alpha-D-muramoyl-L-alanyl-gamma-D-glutamyl-meso-2,6-diaminopimelate + ADP + phosphate + H(+). The protein operates within cell wall biogenesis; peptidoglycan biosynthesis. In terms of biological role, catalyzes the addition of meso-diaminopimelic acid to the nucleotide precursor UDP-N-acetylmuramoyl-L-alanyl-D-glutamate (UMAG) in the biosynthesis of bacterial cell-wall peptidoglycan. The polypeptide is UDP-N-acetylmuramoyl-L-alanyl-D-glutamate--2,6-diaminopimelate ligase (Aquifex aeolicus (strain VF5)).